The following is a 244-amino-acid chain: MIEPLVVEELHYSYPDGTAALRGITLALGTGENVALVGPNGSGKSTLLLHLNGLLLPGRGRIEVGGKPLSASTLEFARRFVGLLFQNPEDQLFMPTVGEDVAFGPQNLGRKGEKLRECVRTALERVGLEPARFLERQSYNLSIGEKKRVALAGVLAMEPEVLVLDEPSAGLDPRSRRRLIRLLTELPQTKLVATHDLDMALETCTRTIIIDRGQVVADGPSDQILADRVLLETHGLELPLSLGR.

Positions 5-237 constitute an ABC transporter domain; the sequence is LVVEELHYSY…RVLLETHGLE (233 aa). Residue 38 to 45 participates in ATP binding; the sequence is GPNGSGKS.

It belongs to the ABC transporter superfamily.

Its subcellular location is the cell inner membrane. Functionally, probably part of an ABC transporter complex. Responsible for energy coupling to the transport system. This chain is Putative ABC transporter ATP-binding protein gll0289, found in Gloeobacter violaceus (strain ATCC 29082 / PCC 7421).